A 200-amino-acid polypeptide reads, in one-letter code: Small ribosomal subunit protein uS4 (200 aa).

The segment at 1–43 is disordered; sequence MARYTGPRGRRDRRAGVMLSSMRKNPLEKKPYPPGEHGRDRQR. Residues 25–43 are compositionally biased toward basic and acidic residues; the sequence is NPLEKKPYPPGEHGRDRQR. An S4 RNA-binding domain is found at 92-158; it reads LRMDNVVYRM…QPIQEAVEQV (67 aa).

It belongs to the universal ribosomal protein uS4 family. As to quaternary structure, part of the 30S ribosomal subunit. Contacts protein S5. The interaction surface between S4 and S5 is involved in control of translational fidelity.

One of the primary rRNA binding proteins, it binds directly to 16S rRNA where it nucleates assembly of the body of the 30S subunit. Its function is as follows. With S5 and S12 plays an important role in translational accuracy. This chain is Small ribosomal subunit protein uS4, found in Rubrobacter xylanophilus (strain DSM 9941 / JCM 11954 / NBRC 16129 / PRD-1).